The chain runs to 480 residues: ATP synthase subunit beta (480 aa).

158–165 (GGAGVGKT) contacts ATP.

It belongs to the ATPase alpha/beta chains family. In terms of assembly, F-type ATPases have 2 components, CF(1) - the catalytic core - and CF(0) - the membrane proton channel. CF(1) has five subunits: alpha(3), beta(3), gamma(1), delta(1), epsilon(1). CF(0) has three main subunits: a(1), b(2) and c(9-12). The alpha and beta chains form an alternating ring which encloses part of the gamma chain. CF(1) is attached to CF(0) by a central stalk formed by the gamma and epsilon chains, while a peripheral stalk is formed by the delta and b chains.

The protein resides in the cell inner membrane. The enzyme catalyses ATP + H2O + 4 H(+)(in) = ADP + phosphate + 5 H(+)(out). In terms of biological role, produces ATP from ADP in the presence of a proton gradient across the membrane. The catalytic sites are hosted primarily by the beta subunits. The chain is ATP synthase subunit beta from Koribacter versatilis (strain Ellin345).